A 435-amino-acid polypeptide reads, in one-letter code: 3-phosphoshikimate 1-carboxyvinyltransferase (435 aa).

The 3-phosphoshikimate site is built by K15, S16, and R20. K15 is a binding site for phosphoenolpyruvate. Residues G96 and R124 each contribute to the phosphoenolpyruvate site. 3-phosphoshikimate-binding residues include S169, Q171, S195, D318, and K345. Q171 is a binding site for phosphoenolpyruvate. The active-site Proton acceptor is the D318. The phosphoenolpyruvate site is built by R349 and R393.

It belongs to the EPSP synthase family. In terms of assembly, monomer.

The protein localises to the cytoplasm. It carries out the reaction 3-phosphoshikimate + phosphoenolpyruvate = 5-O-(1-carboxyvinyl)-3-phosphoshikimate + phosphate. It participates in metabolic intermediate biosynthesis; chorismate biosynthesis; chorismate from D-erythrose 4-phosphate and phosphoenolpyruvate: step 6/7. Functionally, catalyzes the transfer of the enolpyruvyl moiety of phosphoenolpyruvate (PEP) to the 5-hydroxyl of shikimate-3-phosphate (S3P) to produce enolpyruvyl shikimate-3-phosphate and inorganic phosphate. The protein is 3-phosphoshikimate 1-carboxyvinyltransferase of Chlorobium chlorochromatii (strain CaD3).